A 94-amino-acid chain; its full sequence is uncharacterized protein (94 aa).

To M.tuberculosis Rv2632c.

This is an uncharacterized protein from Mycobacterium tuberculosis (strain CDC 1551 / Oshkosh).